The sequence spans 472 residues: Poly(A) polymerase catalytic subunit (472 aa).

Catalysis depends on residues Asp-191 and Asp-193.

This sequence belongs to the poxviridae poly(A) polymerase catalytic subunit family. Heterodimer of a large (catalytic) subunit and a small (regulatory) subunit.

The catalysed reaction is RNA(n) + ATP = RNA(n)-3'-adenine ribonucleotide + diphosphate. Polymerase that creates the 3'-poly(A) tail of mRNA's. This Capra hircus (Goat) protein is Poly(A) polymerase catalytic subunit (PAPL).